A 748-amino-acid polypeptide reads, in one-letter code: Meprin A subunit alpha (748 aa).

The N-terminal stretch at 1–20 (MLWTLPVCLLSLSFSAHIAA) is a signal peptide. The propeptide occupies 21-66 (VSIQHLSTGHDHDDVDVGEQQKDISEINSAAGLNLFQGDILLPRTR). The Peptidase M12A domain maps to 67–261 (NALRDPSSRW…TRLNRMYNCT (195 aa)). Residues 67 to 719 (NALRDPSSRW…RCQAMHVHGS (653 aa)) are Extracellular-facing. 3 disulfides stabilise this stretch: C108–C260, C129–C148, and C270–C432. A glycan (N-linked (GlcNAc...) asparagine) is linked at N141. H156 is a Zn(2+) binding site. Residue E157 is part of the active site. H160 and H166 together coordinate Zn(2+). Residues N223, N259, N319, N441, and N542 are each glycosylated (N-linked (GlcNAc...) asparagine). The 170-residue stretch at 265–434 (TLLDHCAFEK…ITLTETPCPT (170 aa)) folds into the MAM domain. Residues 435–596 (GVWTIRNISQ…DDTLIIFVDF (162 aa)) form the MATH domain. The tract at residues 641–668 (LPRRLDQRQPSRPKRSVENTGPMEDHNW) is disordered. In terms of domain architecture, EGF-like spans 672-712 (FRDPCDPNPCQNEGTCVNVKGMASCRCVSGHAFFYTGERCQ). Cystine bridges form between C676/C687, C681/C696, and C698/C711. A helical transmembrane segment spans residues 720 to 739 (LLGLLIGCITALIFLTFITF). The Cytoplasmic portion of the chain corresponds to 740 to 748 (SNTYQKLRQ).

As to quaternary structure, homotetramer consisting of disulfide-linked alpha subunits, homooligomer consisting of disulfide-linked alpha subunit homodimers, or heterotetramer of two alpha and two beta subunits formed by non-covalent association of two disulfide-linked heterodimers. Interacts with MBL2 through its carbohydrate moiety. This interaction may inhibit its catalytic activity. Zn(2+) serves as cofactor. In terms of processing, N-glycosylated; contains GlcNAc, galactose, mannose and a small amount of fucose. In terms of tissue distribution, colocalized with E-24.11 in proximal tubules of juxtamedullary nephrons.

It localises to the membrane. The catalysed reaction is Hydrolysis of protein and peptide substrates preferentially on carboxyl side of hydrophobic residues.. Inhibited by actinonin. This chain is Meprin A subunit alpha (Mep1a), found in Rattus norvegicus (Rat).